Here is a 366-residue protein sequence, read N- to C-terminus: 3-dehydroquinate synthase (366 aa).

NAD(+) is bound by residues 107 to 111, 131 to 132, Lys144, and Lys153; these read GVIGD and TT. Residues Glu186, His251, and His268 each coordinate Zn(2+).

The protein belongs to the sugar phosphate cyclases superfamily. Dehydroquinate synthase family. The cofactor is Co(2+). Zn(2+) is required as a cofactor. NAD(+) serves as cofactor.

It is found in the cytoplasm. It catalyses the reaction 7-phospho-2-dehydro-3-deoxy-D-arabino-heptonate = 3-dehydroquinate + phosphate. It participates in metabolic intermediate biosynthesis; chorismate biosynthesis; chorismate from D-erythrose 4-phosphate and phosphoenolpyruvate: step 2/7. In terms of biological role, catalyzes the conversion of 3-deoxy-D-arabino-heptulosonate 7-phosphate (DAHP) to dehydroquinate (DHQ). In Microcystis aeruginosa (strain NIES-843 / IAM M-2473), this protein is 3-dehydroquinate synthase.